The primary structure comprises 549 residues: MKRVLTALAATLPFAANAADAISGAVERQPTNWQAIIMFLIFVVFTLGITYWASKRVRSRSDYYTAGGNITGFQNGLAIAGDYMSAASFLGISALVFTSGYDGLIYSLGFLVGWPIILFLIAERLRNLGRYTFADVASYRLKQGPIRILSACGSLVVVALYLIAQMVGAGKLIELLFGLNYHIAVVLVGVLMMMYVLFGGMLATTWVQIIKAVLLLFGASFMAFMVMKHVGFSFNNLFSEAMAVHPKGVDIMKPGGLVKDPISALSLGLGLMFGTAGLPHILMRFFTVSDAREARKSVFYATGFMGYFYILTFIIGFGAIMLVGANPEYKDAAGHLIGGNNMAAVHLANAVGGNLFLGFISAVAFATILAVVAGLTLAGASAVSHDLYANVFKKGATEREELRVSKITVLILGVIAIILGVLFENQNIAFMVGLAFAIAASCNFPIILLSMYWSKLTTRGAMMGGWLGLITAVVLMILGPTIWVQILGHEKAIFPYEYPALFSISVAFLGIWFFSATDNSAEGARERELFRAQFIRSQTGFGVEQGRAH.

The next 13 helical transmembrane spans lie at 33 to 53, 77 to 97, 103 to 123, 148 to 168, 183 to 203, 206 to 226, 262 to 282, 303 to 323, 355 to 375, 404 to 424, 428 to 448, 464 to 484, and 493 to 513; these read WQAI…TYWA, LAIA…ALVF, GLIY…LIAE, ILSA…QMVG, IAVV…GMLA, WVQI…AFMV, ISAL…PHIL, GFMG…IMLV, LFLG…VAGL, VSKI…VLFE, IAFM…PIIL, GGWL…TIWV, and IFPY…GIWF.

Belongs to the sodium:solute symporter (SSF) (TC 2.A.21) family.

It localises to the cell inner membrane. In terms of biological role, transports acetate. This is Cation/acetate symporter ActP from Escherichia coli O8 (strain IAI1).